A 196-amino-acid chain; its full sequence is Protein GrpE (196 aa).

The tract at residues 1-39 (MSSKEQKTPEGQAPEEIIMDQHEEIEAVEPEASAEQVDP) is disordered.

The protein belongs to the GrpE family. In terms of assembly, homodimer.

It is found in the cytoplasm. In terms of biological role, participates actively in the response to hyperosmotic and heat shock by preventing the aggregation of stress-denatured proteins, in association with DnaK and GrpE. It is the nucleotide exchange factor for DnaK and may function as a thermosensor. Unfolded proteins bind initially to DnaJ; upon interaction with the DnaJ-bound protein, DnaK hydrolyzes its bound ATP, resulting in the formation of a stable complex. GrpE releases ADP from DnaK; ATP binding to DnaK triggers the release of the substrate protein, thus completing the reaction cycle. Several rounds of ATP-dependent interactions between DnaJ, DnaK and GrpE are required for fully efficient folding. The sequence is that of Protein GrpE from Escherichia coli (strain SMS-3-5 / SECEC).